Consider the following 200-residue polypeptide: Recombination protein RecR (200 aa).

Residues Cys57–Cys72 form a C4-type zinc finger. The Toprim domain occupies Thr80–Pro175.

Belongs to the RecR family.

Functionally, may play a role in DNA repair. It seems to be involved in an RecBC-independent recombinational process of DNA repair. It may act with RecF and RecO. This Pseudomonas syringae pv. tomato (strain ATCC BAA-871 / DC3000) protein is Recombination protein RecR.